Consider the following 48-residue polypeptide: Small polypeptide DEVIL 19 (48 aa).

The tract at residues alanine 13–isoleucine 44 is required for DVL/RTFL small polypeptide activity. A helical membrane pass occupies residues glutamine 25–tryptophan 42.

This sequence belongs to the DVL/RTFL small polypeptides family.

The protein localises to the cell membrane. In terms of biological role, small polypeptide acting as a regulatory molecule which coordinates cellular responses required for differentiation, growth and development, probably by restricting polar cell proliferation in lateral organs and coordinating socket cell recruitment and differentiation at trichome sites. This chain is Small polypeptide DEVIL 19, found in Arabidopsis thaliana (Mouse-ear cress).